The sequence spans 101 residues: Small ribosomal subunit protein uS10 (101 aa).

This sequence belongs to the universal ribosomal protein uS10 family. As to quaternary structure, part of the 30S ribosomal subunit.

In terms of biological role, involved in the binding of tRNA to the ribosomes. In Mycobacterium leprae (strain Br4923), this protein is Small ribosomal subunit protein uS10.